The sequence spans 94 residues: uncharacterized protein (94 aa).

Transmembrane regions (helical) follow at residues 9 to 29 (TLAK…FFST) and 34 to 54 (LIEL…VFIV).

Its subcellular location is the cell membrane. This is an uncharacterized protein from Bacillus subtilis (strain 168).